Consider the following 305-residue polypeptide: MPDQLPATDSTFRHVPVLADVLLNALDEEPSVHWQSGLVVDATLGGGGHSSLLLDRYPDLRLIGLDQDPTARAAAATRLSPWKERVSIVATNFADYSPPQSASLVLADLGVSSPQLDVAARGFSFRLDGPLDMRMNPESDGETAGELIERMEESDLADLIYAYGEERLSRRIARRIKADLAAQGPYAGTASFAYAVAGCYPPKARRGRIHPATRTFQALRIAVNDELGVLDQLLSSAPGWLQPGGLLAIISFHSLEDRRVKTAFLQDERLDRITRRPLVASAEEQERNPRSRSAKLRIARKRSES.

Residues 47-49 (GGH), Asp66, Phe93, Asp108, and Gln115 contribute to the S-adenosyl-L-methionine site. The tract at residues 280 to 305 (ASAEEQERNPRSRSAKLRIARKRSES) is disordered. The segment covering 290-305 (RSRSAKLRIARKRSES) has biased composition (basic residues).

Belongs to the methyltransferase superfamily. RsmH family.

Its subcellular location is the cytoplasm. It carries out the reaction cytidine(1402) in 16S rRNA + S-adenosyl-L-methionine = N(4)-methylcytidine(1402) in 16S rRNA + S-adenosyl-L-homocysteine + H(+). Its function is as follows. Specifically methylates the N4 position of cytidine in position 1402 (C1402) of 16S rRNA. This is Ribosomal RNA small subunit methyltransferase H from Synechococcus sp. (strain WH7803).